Consider the following 278-residue polypeptide: MAIRKYKPTTPGRRASSVSEFEEITRSTPEKSLLRPLSKTGGRNNYGRITTRHIGGGHKRRYRLIDFRRTDKDGIPAKVAHIEYDPNRTANIALLHYADGEKRYIIAPKGLKQGTIVEAGPNADIKVGNNLPLRNIPTGTTIHAVELKPGAGAKLARSAGASIQLLGKEGKYAILRMPSSEIRRVDIRCRATVGEVGNADQMNIRWGKAGRMRWKGVRPTVRGVVMNPVDHPHGGGEGKTSGGRHPVSPWGHKEGRTRNPNRYSNNMIVRRRRPNKKR.

2 disordered regions span residues 1–53 and 224–278; these read MAIR…TTRH and VVMN…NKKR. Basic and acidic residues predominate over residues 23-33; it reads EITRSTPEKSL. The span at 258-267 shows a compositional bias: polar residues; that stretch reads RNPNRYSNNM. A compositionally biased stretch (basic residues) spans 269 to 278; that stretch reads VRRRRPNKKR.

Belongs to the universal ribosomal protein uL2 family. In terms of assembly, part of the 50S ribosomal subunit. Forms a bridge to the 30S subunit in the 70S ribosome.

Its function is as follows. One of the primary rRNA binding proteins. Required for association of the 30S and 50S subunits to form the 70S ribosome, for tRNA binding and peptide bond formation. It has been suggested to have peptidyltransferase activity; this is somewhat controversial. Makes several contacts with the 16S rRNA in the 70S ribosome. This is Large ribosomal subunit protein uL2 from Corynebacterium aurimucosum (strain ATCC 700975 / DSM 44827 / CIP 107346 / CN-1) (Corynebacterium nigricans).